Reading from the N-terminus, the 409-residue chain is Glycogenin (409 aa).

Residues Leu-8, Tyr-14, and Arg-80 each contribute to the UDP site. Residues Leu-8, Tyr-14, Arg-80, Lys-89, Asp-105, Asp-107, Asn-140, Ser-141, Asp-169, Asp-172, and Gln-173 each coordinate UDP-alpha-D-glucose. The UDP site is built by Asp-105 and Asp-107. Mn(2+) contacts are provided by Asp-105 and Asp-107. Tyr-212 carries an O-linked (Glc...) tyrosine glycan. Residues His-229, Gly-232, and Lys-235 each contribute to the UDP site. Position 229 (His-229) interacts with Mn(2+). The UDP-alpha-D-glucose site is built by Gly-232 and Lys-235. The disordered stretch occupies residues 283–303 (RIEEDSHETEEKVDEEVSISE).

This sequence belongs to the glycosyltransferase 8 family. Glycogenin subfamily. It depends on Mn(2+) as a cofactor.

It localises to the cytoplasm. Its subcellular location is the vacuole. It catalyses the reaction L-tyrosyl-[glycogenin] + UDP-alpha-D-glucose = alpha-D-glucosyl-L-tyrosyl-[glycogenin] + UDP + H(+). The enzyme catalyses [1,4-alpha-D-glucosyl](n)-L-tyrosyl-[glycogenin] + UDP-alpha-D-glucose = [1,4-alpha-D-glucosyl](n+1)-L-tyrosyl-[glycogenin] + UDP + H(+). Its function is as follows. Glycogenin participates in the glycogen biosynthetic process along with glycogen synthase and glycogen branching enzyme. It catalyzes the formation of a short alpha (1,4)-glucosyl chain covalently attached via a glucose 1-O-tyrosyl linkage to internal tyrosine residues and these chains act as primers for the elongation reaction catalyzed by glycogen synthase. This Komagataella phaffii (strain GS115 / ATCC 20864) (Yeast) protein is Glycogenin.